Consider the following 360-residue polypeptide: Phenylalanine--tRNA ligase alpha subunit (360 aa).

Position 260 (glutamate 260) interacts with Mg(2+).

The protein belongs to the class-II aminoacyl-tRNA synthetase family. Phe-tRNA synthetase alpha subunit type 1 subfamily. Tetramer of two alpha and two beta subunits. Mg(2+) serves as cofactor.

It is found in the cytoplasm. The catalysed reaction is tRNA(Phe) + L-phenylalanine + ATP = L-phenylalanyl-tRNA(Phe) + AMP + diphosphate + H(+). In Sinorhizobium fredii (strain NBRC 101917 / NGR234), this protein is Phenylalanine--tRNA ligase alpha subunit.